The following is a 345-amino-acid chain: Green-sensitive opsin (345 aa).

The Extracellular portion of the chain corresponds to 1 to 37 (MENGTEGKNFYIPMNNRTGLVRSPYEYPQYYLADPWQ). N-linked (GlcNAc...) asparagine glycosylation is found at Asn-3 and Asn-16. A helical transmembrane segment spans residues 38–62 (FKLLGIYMFFLILTGFPINALTLVV). Residues 63 to 74 (TAQNKKLRQPLN) lie on the Cytoplasmic side of the membrane. A helical transmembrane segment spans residues 75 to 100 (FILVNLAVAGLIMVCFGFTVCIYSCM). Over 101 to 114 (VGYFSLGPLGCTIE) the chain is Extracellular. Cys-111 and Cys-188 are oxidised to a cystine. A helical transmembrane segment spans residues 115-134 (GFMATLGGQVSLWSLVVLAI). At 135–153 (ERYIVVCKPMGSFKFTATH) the chain is on the cytoplasmic side. A helical membrane pass occupies residues 154–177 (SAAGCAFTWIMASSCAVPPLVGWS). Residues 178–203 (RYIPEGIQVSCGPDYYTLAPGFNNES) lie on the Extracellular side of the membrane. N-linked (GlcNAc...) asparagine glycosylation is present at Asn-201. A helical transmembrane segment spans residues 204-231 (FVMYMFSCHFCVPVFTIFFTYGSLVMTV). At 232-253 (KAAAAQQQDSASTQKAEKEVTR) the chain is on the cytoplasmic side. Residues 254–277 (MCFLMVLGFLLAWVPYASYAAWIF) traverse the membrane as a helical segment. The Extracellular portion of the chain corresponds to 278-285 (FNRGAAFS). A helical membrane pass occupies residues 286 to 310 (AMSMAIPSFFSKSSALFNPIIYILL). Lys-297 is modified (N6-(retinylidene)lysine). Residues 311-345 (NKQFRNCMLATIGMGGMVEDETSVSTSKTEVSTAA) are Cytoplasmic-facing.

Belongs to the G-protein coupled receptor 1 family. Opsin subfamily. Post-translationally, phosphorylated on some or all of the serine and threonine residues present in the C-terminal region. As to expression, the color pigments are found in the cone photoreceptor cells.

It is found in the membrane. Functionally, visual pigments are the light-absorbing molecules that mediate vision. They consist of an apoprotein, opsin, covalently linked to cis-retinal. The protein is Green-sensitive opsin of Oryzias latipes (Japanese rice fish).